Reading from the N-terminus, the 206-residue chain is FMN-dependent NADH:quinone oxidoreductase (206 aa).

Residues serine 9, 15 to 17, 95 to 98, and 139 to 142 contribute to the FMN site; these read SVS, MYNF, and SRGG.

This sequence belongs to the azoreductase type 1 family. As to quaternary structure, homodimer. The cofactor is FMN.

The catalysed reaction is 2 a quinone + NADH + H(+) = 2 a 1,4-benzosemiquinone + NAD(+). It catalyses the reaction N,N-dimethyl-1,4-phenylenediamine + anthranilate + 2 NAD(+) = 2-(4-dimethylaminophenyl)diazenylbenzoate + 2 NADH + 2 H(+). Functionally, quinone reductase that provides resistance to thiol-specific stress caused by electrophilic quinones. Also exhibits azoreductase activity. Catalyzes the reductive cleavage of the azo bond in aromatic azo compounds to the corresponding amines. The protein is FMN-dependent NADH:quinone oxidoreductase of Legionella pneumophila subsp. pneumophila (strain Philadelphia 1 / ATCC 33152 / DSM 7513).